The chain runs to 326 residues: Neuferricin homolog (326 aa).

Positions 1 to 34 are cleaved as a signal peptide; that stretch reads MEKNRRKKDDAGVMTKTLAGVAALTFLVSFICSS. One can recognise a Cytochrome b5 heme-binding domain in the interval 98–197; it reads KHVFTPEQLH…KEYPLVGVVA (100 aa).

Belongs to the cytochrome b5 family. MAPR subfamily.

The protein resides in the secreted. Heme-binding protein. The polypeptide is Neuferricin homolog (Caenorhabditis briggsae).